Consider the following 333-residue polypeptide: MGAVWSALLVGGGLAGALILWLLRGDSGAPGKDGGAEPLKDAPPGEAAAPGGGPGGGGSGGLSPEPSDRELVSKAEHLRESNGHLISESKDLGNLTEAQRLQNVGNAREYVPVGKVPDTHSRANSETSRNQSPESRVGEWRLPKGHETAVKVAGSVAEKLPSSSPLMDRAEAASLAQSAGHEDWEVVSRHSSWGSVGLGGSLEASRLSLNQGMDESRNSLVGGGWEVDGKVVSVKPRQVSIQFKVHYSTSTDVQFIAVTGDHESLGGWNTYIPLHYCKDGLWSHSVFLPADTVVEWKFVLVENKEVTRWEECSNRRLQTGHEDKVVHGWWGIH.

Topologically, residues 1 to 6 (MGAVWS) are extracellular. Residues 7–23 (ALLVGGGLAGALILWLL) traverse the membrane as a helical segment. The Cytoplasmic segment spans residues 24–333 (RGDSGAPGKD…KVVHGWWGIH (310 aa)). Disordered regions lie at residues 31–73 (GKDG…ELVS) and 106–139 (NARE…RVGE). Positions 50-61 (PGGGPGGGGSGG) are enriched in gly residues. A Phosphoserine modification is found at serine 67. Polar residues predominate over residues 124–134 (NSETSRNQSPE). 2 positions are modified to phosphoserine: serine 135 and serine 162. Positions 181-187 (HEDWEVV) match the LIR motif. 7 positions are modified to phosphoserine: serine 191, serine 192, serine 201, serine 205, serine 208, serine 216, and serine 219. Residues 233–332 (SVKPRQVSIQ…DKVVHGWWGI (100 aa)) enclose the CBM20 domain.

As to quaternary structure, interacts with the ATG8 family proteins GABARAP and GABARAPL1. Interacts with several glycogen-associated proteins, such as GYS2 (liver glycogen synthase), GDE (glycogen debranching enzyme), GBE1 (glycogen branching enzyme 1) and EPM2A (Laforin). Ubiquitinated, which leads to proteasomal degradation.

It is found in the preautophagosomal structure membrane. The protein resides in the endoplasmic reticulum membrane. The protein localises to the cell membrane. It localises to the sarcolemma. Its subcellular location is the T-tubule. Acts as a cargo receptor for glycogen. Delivers its cargo to an autophagic pathway called glycophagy, resulting in the transport of glycogen to lysosomes. The polypeptide is Starch-binding domain-containing protein 1 (Rattus norvegicus (Rat)).